The primary structure comprises 44 residues: Photosystem I reaction center subunit IX (44 aa).

A helical transmembrane segment spans residues 7–27 (YLSVAPVISTLWFGSLAGLLI).

It belongs to the PsaJ family.

It localises to the plastid. The protein localises to the chloroplast thylakoid membrane. In terms of biological role, may help in the organization of the PsaE and PsaF subunits. The chain is Photosystem I reaction center subunit IX from Populus alba (White poplar).